Reading from the N-terminus, the 31-residue chain is Cytochrome b6-f complex subunit 6 (31 aa).

The helical transmembrane segment at 4-24 threads the bilayer; the sequence is ITSYFGFLLAVLTITSALFIG.

It belongs to the PetL family. In terms of assembly, the 4 large subunits of the cytochrome b6-f complex are cytochrome b6, subunit IV (17 kDa polypeptide, PetD), cytochrome f and the Rieske protein, while the 4 small subunits are PetG, PetL, PetM and PetN. The complex functions as a dimer.

It localises to the plastid. The protein localises to the chloroplast thylakoid membrane. Functionally, component of the cytochrome b6-f complex, which mediates electron transfer between photosystem II (PSII) and photosystem I (PSI), cyclic electron flow around PSI, and state transitions. PetL is important for photoautotrophic growth as well as for electron transfer efficiency and stability of the cytochrome b6-f complex. This chain is Cytochrome b6-f complex subunit 6, found in Cucumis sativus (Cucumber).